We begin with the raw amino-acid sequence, 190 residues long: Putative 3-methyladenine DNA glycosylase (190 aa).

Belongs to the DNA glycosylase MPG family.

This is Putative 3-methyladenine DNA glycosylase from Deinococcus radiodurans (strain ATCC 13939 / DSM 20539 / JCM 16871 / CCUG 27074 / LMG 4051 / NBRC 15346 / NCIMB 9279 / VKM B-1422 / R1).